The chain runs to 605 residues: YTH domain-containing protein ECT4 (605 aa).

Disordered regions lie at residues 249-274 and 357-384; these read GVAS…SNSH and ELNR…QTFD. The span at 256 to 274 shows a compositional bias: polar residues; that stretch reads KANNNVPATRNQNSSSNSH. Positions 368–383 are enriched in basic and acidic residues; sequence KATEEVSSEEVKKQTF. Residues 414–551 enclose the YTH domain; sequence AKFFIIKSYS…EQGLKVVKIF (138 aa). RNA-binding positions include 420–422, Asp-426, 436–437, Asn-469, Trp-493, Trp-498, and Trp-506; these read KSY and WA. Positions 580 to 605 are disordered; it reads KQQQSQKQVWEGKTNDEKPGTVDSTM.

Expressed in the shoot apex, at the sites of leaf formation, and in emerging leaves.

The protein localises to the cytoplasm. Specifically recognizes and binds N6-methyladenosine (m6A)-containing RNAs, and regulates mRNA stability. M6A is a modification present at internal sites of mRNAs and some non-coding RNAs and plays a role in mRNA stability and processing. Required for the correct timing of leaf formation and normal leaf morphology. The protein is YTH domain-containing protein ECT4 of Arabidopsis thaliana (Mouse-ear cress).